A 1252-amino-acid chain; its full sequence is MAPSKKAGKKVTPASKKSAGQGKVAKADWKEGFKKKQVGVSDMTLLTTISNEGVNENLQKRWTNGEIYTYIGAVLISVNPFRGRSVETLQRYRGKNRLEVPPHVFGIAESAYYNMNAYHENQCVIISGESGAGKTEAAKRIMQYIAVVSGGQDSSIQEIKDMVLATNPLLESFGCAKTLRNNNSSRHGKYLEIMFNGVGEPVGAQITNYLLEKGRVVGQIENERNFHIFYQFTKGASDEQRELFGLQGPEAYAYTSLSNCLEVSDIDDVKDYHDTITAMGVIGLTPDEQNEIFKMLAIVLWLGNVQFEEMDDGNSSITDTGVTDFVGYLMEADSALVQKVLTSRVIETSKGGRRGSVYDVPLNPAQATSGRDALAKAIYNNLFEWIVSRINVSMKTRSAHAQIIGILDIFGFEIFEDNSFEQLCINYVNEKLQQIFIELTLKTEQEEYVREQIKWTPIKYFNNKIVCDLIEERRPPGIFAALNDACATAHADPAAADNSFVQRTAMLSSNAHFEARGSQFLVRHYAGDVMYNVAGMTDKNKDSLIKDLLDLVGSSGNTFLQTLFPDRPDPNSKKRPPTAGDRIKARALVDNLMKAQPSYIRTIKPNQNRSSSEYDVKAILHQIKYLGLNENIRVRRAGFAYRNTFEKMVERFYLLSSHTSYAGEYTWTGDSKSGCEQILKDTGIAKDEWQMGVTKAFIKNPETLFALETMRDKYWHNMAARIQRAFRNYMRYKHECARRIQRFWKNNKEGIAYAQTRDYGHQILAGRKERRRFSLLSYRRFMGDYLDLNGKSSLGEELAGACNIGGESVTFSSRIHLLVSKLGRSSKPSPRFIVVTEKAVHILILSVRDGQTQYNLERRIPLSTIKSIGMSNLRDDWLAKEGDPLISCYFKTELVSNLVKLTRSTVNVVIGPTIEYSKKKDKMAQIKFIKDETVAKDDLYKSHTVHVASGEPPNSVSRPPAKRKPGVVRPITQGKLLKAGGPSDKPKPRSVPKPKPVAQPLPGRDSTTVAPKPAIKPSVTPSSTVGQRPPPAPPRNIAPPPPPAKPETPMYRAKFAFEGQEGEMSLKKDDVVELVEKDDNGWWLVKMDGVEGWAPNNYLELVPPKAVSAPPPPPRSRPAPTTTPKISLTSVVADASSKPVSVFPGMQPSNGSATPWKKPLTADTTPASSRPSSAIGSKPPPPVAAKPKPPVIPVKPSVSAKGPAKPPIPTAPRPPAASTSRSSKPATAVGQVDLAAAVSLFVTHSRELLLMM.

The disordered stretch occupies residues 1 to 27 (MAPSKKAGKKVTPASKKSAGQGKVAKA). Residues 38–712 (VGVSDMTLLT…TLFALETMRD (675 aa)) enclose the Myosin motor domain. 128–135 (GESGAGKT) is a binding site for ATP. Position 356 is a phosphoserine (Ser-356). The tract at residues 403–485 (IIGILDIFGF…PGIFAALNDA (83 aa)) is actin-binding. IQ domains lie at 716–736 (HNMAARIQRAFRNYMRYKHEC) and 737–762 (ARRIQRFWKNNKEGIAYAQTRDYGHQ). The 184-residue stretch at 770-953 (RRRFSLLSYR…TVHVASGEPP (184 aa)) folds into the TH1 domain. Disordered regions lie at residues 945-1049 (VHVA…PETP) and 1103-1228 (PPKA…PATA). 2 stretches are compositionally biased toward pro residues: residues 989-999 (RSVPKPKPVAQ) and 1028-1046 (RPPPAPPRNIAPPPPPAKP). The 59-residue stretch at 1046–1104 (PETPMYRAKFAFEGQEGEMSLKKDDVVELVEKDDNGWWLVKMDGVEGWAPNNYLELVPP) folds into the SH3 domain. Residues 1162–1175 (ADTTPASSRPSSAI) show a composition bias toward polar residues. Residues 1178–1193 (KPPPPVAAKPKPPVIP) are compositionally biased toward pro residues. Low complexity predominate over residues 1194-1203 (VKPSVSAKGP). The segment covering 1204-1215 (AKPPIPTAPRPP) has biased composition (pro residues). A compositionally biased stretch (low complexity) spans 1216-1228 (AASTSRSSKPATA).

It belongs to the TRAFAC class myosin-kinesin ATPase superfamily. Myosin family. Phosphorylation of the TEDS site (Ser-356) is required for the polarization of the actin cytoskeleton. Phosphorylation probably activates the myosin-I ATPase activity.

It is found in the cytoplasm. The protein localises to the cytoskeleton. It localises to the actin patch. In terms of biological role, type-I myosin implicated in the organization of the actin cytoskeleton. Required for proper actin cytoskeleton polarization. At the cell cortex, assembles in patch-like structures together with proteins from the actin-polymerizing machinery and promotes actin assembly. Functions as actin nucleation-promoting factor (NPF) for the Arp2/3 complex. The protein is Myosin-1 (MYO1) of Laccaria bicolor (strain S238N-H82 / ATCC MYA-4686) (Bicoloured deceiver).